The following is a 219-amino-acid chain: Mediator of RNA polymerase II transcription subunit 7 (219 aa).

A disordered region spans residues 173–203; it reads LPDPAESDRLNSTVEPMDTGDDGEAGKSRGE.

This sequence belongs to the Mediator complex subunit 7 family. In terms of assembly, component of the Mediator complex.

It is found in the nucleus. Functionally, component of the Mediator complex, a coactivator involved in the regulated transcription of nearly all RNA polymerase II-dependent genes. Mediator functions as a bridge to convey information from gene-specific regulatory proteins to the basal RNA polymerase II transcription machinery. Mediator is recruited to promoters by direct interactions with regulatory proteins and serves as a scaffold for the assembly of a functional preinitiation complex with RNA polymerase II and the general transcription factors. The chain is Mediator of RNA polymerase II transcription subunit 7 (MED7) from Aedes aegypti (Yellowfever mosquito).